We begin with the raw amino-acid sequence, 130 residues long: D-ribose pyranase (130 aa).

The active-site Proton donor is His20. Substrate-binding positions include Asp28, His97, and 119–121; that span reads YAN.

It belongs to the RbsD / FucU family. RbsD subfamily. Homodecamer.

It is found in the cytoplasm. It carries out the reaction beta-D-ribopyranose = beta-D-ribofuranose. It functions in the pathway carbohydrate metabolism; D-ribose degradation; D-ribose 5-phosphate from beta-D-ribopyranose: step 1/2. Functionally, catalyzes the interconversion of beta-pyran and beta-furan forms of D-ribose. This is D-ribose pyranase from Thermoanaerobacter pseudethanolicus (strain ATCC 33223 / 39E) (Clostridium thermohydrosulfuricum).